The chain runs to 214 residues: Pyridoxine/pyridoxamine 5'-phosphate oxidase (214 aa).

Residues 9–12 (RREY) and Lys67 contribute to the substrate site. FMN contacts are provided by residues 62-67 (RTVLLK), 77-78 (YS), Arg83, Lys84, and Gln106. 3 residues coordinate substrate: Tyr124, Arg128, and Ser132. FMN is bound by residues 141–142 (QS) and Trp186. 192–194 (RLH) lines the substrate pocket. Arg196 contacts FMN.

It belongs to the pyridoxamine 5'-phosphate oxidase family. Homodimer. Requires FMN as cofactor.

The catalysed reaction is pyridoxamine 5'-phosphate + O2 + H2O = pyridoxal 5'-phosphate + H2O2 + NH4(+). It carries out the reaction pyridoxine 5'-phosphate + O2 = pyridoxal 5'-phosphate + H2O2. It participates in cofactor metabolism; pyridoxal 5'-phosphate salvage; pyridoxal 5'-phosphate from pyridoxamine 5'-phosphate: step 1/1. Its pathway is cofactor metabolism; pyridoxal 5'-phosphate salvage; pyridoxal 5'-phosphate from pyridoxine 5'-phosphate: step 1/1. Catalyzes the oxidation of either pyridoxine 5'-phosphate (PNP) or pyridoxamine 5'-phosphate (PMP) into pyridoxal 5'-phosphate (PLP). The protein is Pyridoxine/pyridoxamine 5'-phosphate oxidase of Porphyromonas gingivalis (strain ATCC BAA-308 / W83).